A 160-amino-acid chain; its full sequence is Protein-export protein SecB (160 aa).

The protein belongs to the SecB family. In terms of assembly, homotetramer, a dimer of dimers. One homotetramer interacts with 1 SecA dimer.

The protein localises to the cytoplasm. One of the proteins required for the normal export of preproteins out of the cell cytoplasm. It is a molecular chaperone that binds to a subset of precursor proteins, maintaining them in a translocation-competent state. It also specifically binds to its receptor SecA. The protein is Protein-export protein SecB of Burkholderia multivorans (strain ATCC 17616 / 249).